We begin with the raw amino-acid sequence, 754 residues long: MAPRKNAKGGGGNSSSSSSGSPTGCTSGGSSSPGARRETKQGGLKNGRKGGLSGSSFFTWFMVIALLGVWTSVAVVWFDLVDYEEVLAKAKDFRYNLSEVLQGKLGIYDADGDGDFDVDDAKVLLGLKEKPAPKPTVPPEEADMYPWLEDQVLESPGRQNIEDEVYEQVQSLDETVYSEPGENLPQEPEGPAEELQPDDHVFVGSDADDRYEPMGTGAVHEETEDSYHIEETASPAYSQDMEDMMYEQENPDSSEPVVVDDAERTYQETDDVTYRDYDEQDHAVDNSNTILEEPHMPPAEEQQEVPPETNKKADEPGKKGKVKKKKPKLLNKFDKTIKAELDAAEKLRKRGKIEEAVNAFEELVRKYPQSPGARYGKAQCEDDLAEKRRSNEILRRAIETYQEAASLPDAPTDLVKLSLKRRSDRQQFLGHMRGSLLTLQKLVQLFPDDTALKNDLGVGYLLIGDNDSAKKVYEEVLSVTPNDGFAKVHYGFILKAQNKIAESIPYLKEGIESGDPGTDDGRFYFHLGDAMQRVGNKEAYRWYELGHQRGHFASVWQRSLYNVQGLKAQPWWTPKETGYTELVKSLERNWKLIRDEGLAAMDRTHGLFLPEDENLREKGDWSQFTLWQQGRKNENACKGAPKTCSLLDKFPETTGCRRGQIKYSIMHPGTHVWPHTGPTNCRLRMHLGLVIPKEGCKIRCANETRTWEEGKVLIFDDSFEHEVWQDAASFRLIFIVDVWHPELTPHQRRSLPAI.

Residues 1 to 48 are disordered; sequence MAPRKNAKGGGGNSSSSSSGSPTGCTSGGSSSPGARRETKQGGLKNGR. Residues 1-56 are Cytoplasmic-facing; the sequence is MAPRKNAKGGGGNSSSSSSGSPTGCTSGGSSSPGARRETKQGGLKNGRKGGLSGSS. Residues 14-34 show a composition bias toward low complexity; it reads SSSSSSGSPTGCTSGGSSSPG. Position 15 is a phosphoserine (S15). Residues 57 to 77 form a helical; Signal-anchor for type II membrane protein membrane-spanning segment; sequence FFTWFMVIALLGVWTSVAVVW. Residues 78-754 are Lumenal-facing; it reads FDLVDYEEVL…PHQRRSLPAI (677 aa). The N-linked (GlcNAc...) asparagine glycan is linked to N96. 5 residues coordinate Ca(2+): D109, D111, D113, D115, and D120. 2 disordered regions span residues 176-197 and 247-326; these read VYSE…ELQP and EQEN…KKKK. 2 stretches are compositionally biased toward basic and acidic residues: residues 261-284 and 309-318; these read DAER…DHAV and TNKKADEPGK. 5 TPR repeats span residues 337 to 370, 378 to 411, 450 to 483, 485 to 517, and 521 to 553; these read IKAE…YPQS, AQCE…PDAP, TALK…TPND, FAKV…GDPG, and GRFY…GHFA. N466 is a glycosylation site (N-linked (GlcNAc...) asparagine). A 2-oxoglutarate-binding site is contributed by W621. C637 and C644 are joined by a disulfide. 2-oxoglutarate is bound at residue S664. H675 serves as a coordination point for Fe cation. Residue 684 to 686 participates in 2-oxoglutarate binding; sequence RMH. N702 carries an N-linked (GlcNAc...) asparagine glycan. Position 721 (H721) interacts with Fe cation. Position 731 (R731) interacts with 2-oxoglutarate.

It belongs to the aspartyl/asparaginyl beta-hydroxylase family. As to quaternary structure, monomer. The cofactor is Fe cation. In terms of processing, might be processed to the 56 kDa (AA 289-754) or 52 kDa (AA 311-754) forms in the lumen of the endoplasmic reticulum.

Its subcellular location is the endoplasmic reticulum membrane. The enzyme catalyses L-aspartyl-[protein] + 2-oxoglutarate + O2 = 3-hydroxy-L-aspartyl-[protein] + succinate + CO2. Its function is as follows. Specifically hydroxylates an Asp or Asn residue in certain epidermal growth factor-like (EGF) domains of a number of proteins. The protein is Aspartyl/asparaginyl beta-hydroxylase (ASPH) of Bos taurus (Bovine).